The following is a 49-amino-acid chain: Osteocalcin (49 aa).

Positions 1–47 constitute a Gla domain; that stretch reads YLDHGLGAPAPYPDPLEPRREVCELNPDCDELADHIGFQEAYRRFYG. Pro-9 bears the Hydroxyproline mark. The Ca(2+) site is built by Glu-17, Glu-21, Glu-24, and Asp-30. 4-carboxyglutamate occurs at positions 17, 21, and 24. Cysteines 23 and 29 form a disulfide.

Belongs to the osteocalcin/matrix Gla protein family. In terms of processing, gamma-carboxyglutamate residues are formed by vitamin K dependent carboxylation by GGCX. These residues are essential for the binding of calcium. Decarboxylation promotes the hormone activity.

Its subcellular location is the secreted. The carboxylated form is one of the main organic components of the bone matrix, which constitutes 1-2% of the total bone protein. It acts as a negative regulator of bone formation and is required to limit bone formation without impairing bone resorption or mineralization. The carboxylated form binds strongly to apatite and calcium. In terms of biological role, the uncarboxylated form acts as a hormone secreted by osteoblasts, which regulates different cellular processes, such as energy metabolism, male fertility and brain development. Regulates of energy metabolism by acting as a hormone favoring pancreatic beta-cell proliferation, insulin secretion and sensitivity and energy expenditure. Uncarboxylated osteocalcin hormone also promotes testosterone production in the testes: acts as a ligand for G protein-coupled receptor GPRC6A at the surface of Leydig cells, initiating a signaling response that promotes the expression of enzymes required for testosterone synthesis in a CREB-dependent manner. Also acts as a regulator of brain development: osteocalcin hormone crosses the blood-brain barrier and acts as a ligand for GPR158 on neurons, initiating a signaling response that prevents neuronal apoptosis in the hippocampus, favors the synthesis of all monoamine neurotransmitters and inhibits that of gamma-aminobutyric acid (GABA). Osteocalcin also crosses the placenta during pregnancy and maternal osteocalcin is required for fetal brain development. The protein is Osteocalcin (BGLAP) of Sus scrofa (Pig).